A 234-amino-acid chain; its full sequence is Phosphoglycolate phosphatase (234 aa).

D13 (nucleophile) is an active-site residue. Mg(2+) is bound by residues D13, D15, and D175.

This sequence belongs to the HAD-like hydrolase superfamily. CbbY/CbbZ/Gph/YieH family. Monomer. It depends on Mg(2+) as a cofactor. Chloride is required as a cofactor.

It catalyses the reaction 2-phosphoglycolate + H2O = glycolate + phosphate. It functions in the pathway organic acid metabolism; glycolate biosynthesis; glycolate from 2-phosphoglycolate: step 1/1. Functionally, specifically catalyzes the dephosphorylation of 2-phosphoglycolate. Is involved in the dissimilation of the intracellular 2-phosphoglycolate formed during the DNA repair of 3'-phosphoglycolate ends, a major class of DNA lesions induced by oxidative stress. This chain is Phosphoglycolate phosphatase, found in Pectobacterium atrosepticum (strain SCRI 1043 / ATCC BAA-672) (Erwinia carotovora subsp. atroseptica).